Consider the following 76-residue polypeptide: U-actitoxin-Avd8c (76 aa).

The N-terminal stretch at 1–16 (LVIVFVVLLGVPLISA) is a signal peptide. Residues 17–33 (NEEELLAILQDQRNDAR) constitute a propeptide that is removed on maturation.

This sequence belongs to the sea anemone 8 toxin family.

Its subcellular location is the secreted. The protein resides in the nematocyst. In Anemonia viridis (Snakelocks anemone), this protein is U-actitoxin-Avd8c.